We begin with the raw amino-acid sequence, 288 residues long: Bifunctional protein FolD (288 aa).

NADP(+)-binding positions include 166 to 168 (GAS) and Ile232.

Belongs to the tetrahydrofolate dehydrogenase/cyclohydrolase family. In terms of assembly, homodimer.

It catalyses the reaction (6R)-5,10-methylene-5,6,7,8-tetrahydrofolate + NADP(+) = (6R)-5,10-methenyltetrahydrofolate + NADPH. It carries out the reaction (6R)-5,10-methenyltetrahydrofolate + H2O = (6R)-10-formyltetrahydrofolate + H(+). It participates in one-carbon metabolism; tetrahydrofolate interconversion. Functionally, catalyzes the oxidation of 5,10-methylenetetrahydrofolate to 5,10-methenyltetrahydrofolate and then the hydrolysis of 5,10-methenyltetrahydrofolate to 10-formyltetrahydrofolate. This Citrobacter koseri (strain ATCC BAA-895 / CDC 4225-83 / SGSC4696) protein is Bifunctional protein FolD.